We begin with the raw amino-acid sequence, 343 residues long: Cytoplasmic tRNA 2-thiolation protein 1 (343 aa).

The protein belongs to the TtcA family. CTU1/NCS6/ATPBD3 subfamily.

The protein localises to the cytoplasm. Its pathway is tRNA modification; 5-methoxycarbonylmethyl-2-thiouridine-tRNA biosynthesis. Plays a central role in 2-thiolation of mcm(5)S(2)U at tRNA wobble positions of tRNA(Lys), tRNA(Glu) and tRNA(Gln). Directly binds tRNAs and probably acts by catalyzing adenylation of tRNAs, an intermediate required for 2-thiolation. It is unclear whether it acts as a sulfurtransferase that transfers sulfur from thiocarboxylated URM1 onto the uridine of tRNAs at wobble position. This Drosophila ananassae (Fruit fly) protein is Cytoplasmic tRNA 2-thiolation protein 1.